The sequence spans 194 residues: Leucyl/phenylalanyl-tRNA--protein transferase (194 aa).

The protein belongs to the L/F-transferase family.

The protein localises to the cytoplasm. It carries out the reaction N-terminal L-lysyl-[protein] + L-leucyl-tRNA(Leu) = N-terminal L-leucyl-L-lysyl-[protein] + tRNA(Leu) + H(+). It catalyses the reaction N-terminal L-arginyl-[protein] + L-leucyl-tRNA(Leu) = N-terminal L-leucyl-L-arginyl-[protein] + tRNA(Leu) + H(+). The enzyme catalyses L-phenylalanyl-tRNA(Phe) + an N-terminal L-alpha-aminoacyl-[protein] = an N-terminal L-phenylalanyl-L-alpha-aminoacyl-[protein] + tRNA(Phe). Functions in the N-end rule pathway of protein degradation where it conjugates Leu, Phe and, less efficiently, Met from aminoacyl-tRNAs to the N-termini of proteins containing an N-terminal arginine or lysine. This is Leucyl/phenylalanyl-tRNA--protein transferase from Chlorobium luteolum (strain DSM 273 / BCRC 81028 / 2530) (Pelodictyon luteolum).